The primary structure comprises 194 residues: Holliday junction branch migration complex subunit RuvA (194 aa).

The tract at residues 1–64 (MIGRLRGVLT…DDSAALYGFL (64 aa)) is domain I. A domain II region spans residues 65 to 140 (SESERRLFRH…RAADFNNGIS (76 aa)). The segment at 140 to 144 (STSGK) is flexible linker. Residues 145 to 194 (LNLDTVSEAALALQQLGYKPAEAARMARDAGTESDDVAIVIKKALQTVLR) form a domain III region.

It belongs to the RuvA family. In terms of assembly, homotetramer. Forms an RuvA(8)-RuvB(12)-Holliday junction (HJ) complex. HJ DNA is sandwiched between 2 RuvA tetramers; dsDNA enters through RuvA and exits via RuvB. An RuvB hexamer assembles on each DNA strand where it exits the tetramer. Each RuvB hexamer is contacted by two RuvA subunits (via domain III) on 2 adjacent RuvB subunits; this complex drives branch migration. In the full resolvosome a probable DNA-RuvA(4)-RuvB(12)-RuvC(2) complex forms which resolves the HJ.

The protein localises to the cytoplasm. The RuvA-RuvB-RuvC complex processes Holliday junction (HJ) DNA during genetic recombination and DNA repair, while the RuvA-RuvB complex plays an important role in the rescue of blocked DNA replication forks via replication fork reversal (RFR). RuvA specifically binds to HJ cruciform DNA, conferring on it an open structure. The RuvB hexamer acts as an ATP-dependent pump, pulling dsDNA into and through the RuvAB complex. HJ branch migration allows RuvC to scan DNA until it finds its consensus sequence, where it cleaves and resolves the cruciform DNA. The sequence is that of Holliday junction branch migration complex subunit RuvA from Xylella fastidiosa (strain M23).